A 1211-amino-acid polypeptide reads, in one-letter code: PH domain-containing protein DDB_G0287875 (1211 aa).

In terms of domain architecture, Ras-associating 1 spans 5–90 (QKKILKVFDQ…YKFFFLNPNG (86 aa)). The segment covering 103–112 (KSQSASTSGS) has biased composition (polar residues). Residues 103-133 (KSQSASTSGSAPPKKEPPKPQELQQKQHISK) form a disordered region. The PH domain occupies 132 to 223 (SKGKSGWLLR…WAQELQATMN (92 aa)). Calponin-homology (CH) domains are found at residues 277–384 (TTLV…VGYF) and 392–502 (FNMR…LSGQ). 2 disordered regions span residues 520–941 (VEPE…TESV) and 973–1110 (TSAT…PKNT). The stretch at 527–572 (SIRDKQLKLMREKKEEEDRLKKEKEEKEKEEKEKLEKESSAAAAAT) forms a coiled coil. Residues 528 to 565 (IRDKQLKLMREKKEEEDRLKKEKEEKEKEEKEKLEKES) are compositionally biased toward basic and acidic residues. Low complexity-rich tracts occupy residues 566-596 (SAAA…PLKK), 607-646 (PPTV…TLTP), 655-668 (KKPA…KPVA), and 676-691 (PSSS…TTPS). A compositionally biased stretch (basic and acidic residues) spans 703-729 (QLEKEKQDRLEKARLEKEKAEKEEQEF). Positions 703 to 847 (QLEKEKQDRL…ERKHDENDMD (145 aa)) form a coiled coil. Residues 744-753 (LLEQQKQQQE) show a composition bias toward low complexity. Composition is skewed to basic and acidic residues over residues 754–778 (GQER…QRQI) and 786–853 (EARI…KLLE). Polar residues predominate over residues 862–877 (PTITPPQSLHSSQIIR). A coiled-coil region spans residues 880 to 909 (IEEDDQTNSELEMFQNEYNRLQDEEEHINS). Composition is skewed to low complexity over residues 914–936 (GSSG…GASS) and 976–1010 (TTSD…TNNN). The span at 1032 to 1048 (TKEQQSIIDKQTGLVSK) shows a compositional bias: polar residues. Positions 1048–1076 (KQSTNNESNEQQQQQQQQQQLQQQQSSQN) form a coiled coil. Residues 1049-1083 (QSTNNESNEQQQQQQQQQQLQQQQSSQNSTTSIST) show a composition bias toward low complexity. Positions 1093-1104 (NEEKEKESEPHK) are enriched in basic and acidic residues. Positions 1112 to 1196 (GRVVVRICLE…DRFVFKKNDI (85 aa)) constitute a Ras-associating 2 domain.

This chain is PH domain-containing protein DDB_G0287875, found in Dictyostelium discoideum (Social amoeba).